Here is a 534-residue protein sequence, read N- to C-terminus: Probable alkaline/neutral invertase D (534 aa).

Ser7 and Ser37 each carry phosphoserine. Thr55 carries the post-translational modification Phosphothreonine. Ser532 carries the phosphoserine modification.

The protein belongs to the glycosyl hydrolase 100 family.

The enzyme catalyses Hydrolysis of terminal non-reducing beta-D-fructofuranoside residues in beta-D-fructofuranosides.. Functionally, invertase that cleaves sucrose into glucose and fructose. In Arabidopsis thaliana (Mouse-ear cress), this protein is Probable alkaline/neutral invertase D.